The following is a 178-amino-acid chain: Adenine phosphoribosyltransferase (178 aa).

Belongs to the purine/pyrimidine phosphoribosyltransferase family. As to quaternary structure, homodimer.

The protein localises to the cytoplasm. It catalyses the reaction AMP + diphosphate = 5-phospho-alpha-D-ribose 1-diphosphate + adenine. It participates in purine metabolism; AMP biosynthesis via salvage pathway; AMP from adenine: step 1/1. Catalyzes a salvage reaction resulting in the formation of AMP, that is energically less costly than de novo synthesis. In Cereibacter sphaeroides (strain ATCC 17023 / DSM 158 / JCM 6121 / CCUG 31486 / LMG 2827 / NBRC 12203 / NCIMB 8253 / ATH 2.4.1.) (Rhodobacter sphaeroides), this protein is Adenine phosphoribosyltransferase.